A 101-amino-acid polypeptide reads, in one-letter code: Replication restart protein PriB (101 aa).

The SSB domain maps to 1-101; sequence MTTNNLVLAG…LHAENVELKT (101 aa).

The protein belongs to the PriB family. As to quaternary structure, homodimer. Interacts with PriA and DnaT. Component of the replication restart primosome. Primosome assembly occurs via a 'hand-off' mechanism. PriA binds to replication forks, subsequently PriB then DnaT bind; DnaT then displaces ssDNA to generate the helicase loading substrate.

Involved in the restart of stalled replication forks, which reloads the replicative helicase on sites other than the origin of replication; the PriA-PriB pathway is the major replication restart pathway. During primosome assembly it facilitates complex formation between PriA and DnaT on DNA; stabilizes PriA on DNA. Stimulates the DNA unwinding activity of PriA helicase. In Shewanella piezotolerans (strain WP3 / JCM 13877), this protein is Replication restart protein PriB.